A 453-amino-acid chain; its full sequence is Chromosomal replication initiator protein DnaA (453 aa).

Residues 1–74 are domain I, interacts with DnaA modulators; the sequence is MKEKQFWNRI…GFEIYDAEIT (74 aa). Residues 74 to 113 are domain II; that stretch reads TPHYIFTKPQDTTSSQVEEATNLTLYNYSPKLVSIPYSDT. Residues 114–331 form a domain III, AAA+ region region; it reads GLKEKYTFDN…GAINDITLIA (218 aa). Glycine 158, glycine 160, lysine 161, and threonine 162 together coordinate ATP. The segment at 332–453 is domain IV, binds dsDNA; sequence RVKKIKDITI…EIESIKKKIK (122 aa).

The protein belongs to the DnaA family. Oligomerizes as a right-handed, spiral filament on DNA at oriC.

The protein resides in the cytoplasm. Functionally, plays an essential role in the initiation and regulation of chromosomal replication. ATP-DnaA binds to the origin of replication (oriC) to initiate formation of the DNA replication initiation complex once per cell cycle. Binds the DnaA box (a 9 base pair repeat at the origin) and separates the double-stranded (ds)DNA. Forms a right-handed helical filament on oriC DNA; dsDNA binds to the exterior of the filament while single-stranded (ss)DNA is stabiized in the filament's interior. The ATP-DnaA-oriC complex binds and stabilizes one strand of the AT-rich DNA unwinding element (DUE), permitting loading of DNA polymerase. After initiation quickly degrades to an ADP-DnaA complex that is not apt for DNA replication. Binds acidic phospholipids. This is Chromosomal replication initiator protein DnaA from Streptococcus pneumoniae serotype 19F (strain G54).